A 274-amino-acid polypeptide reads, in one-letter code: Cytochrome b-c1 complex subunit Rieske, mitochondrial (274 aa).

The Mitochondrial matrix segment spans residues 79-103; it reads SHTDVKVPDFYDYRRLEVLDSTKSS. A helical transmembrane segment spans residues 104–140; it reads RESSEARKGFSYLVTAVTTVGVAYAAKNVVTQFISSM. The Mitochondrial intermembrane portion of the chain corresponds to 141-274; the sequence is SASADVLAMA…FTGDDVVVVG (134 aa). The Rieske domain occupies 187–272; that stretch reads EAAVELSQLR…YEFTGDDVVV (86 aa). Cysteine 217, histidine 219, cysteine 236, histidine 239, and serine 241 together coordinate [2Fe-2S] cluster. A disulfide bond links cysteine 222 and cysteine 238.

It belongs to the Rieske iron-sulfur protein family. Component of the ubiquinol-cytochrome c oxidoreductase (cytochrome b-c1 complex, complex III, CIII), a multisubunit enzyme composed of 11 subunits. The complex is composed of 3 respiratory subunits cytochrome b, cytochrome c1 and Rieske protein UQCRFS1, 2 core protein subunits UQCRC1/QCR1 and UQCRC2/QCR2, and 6 low-molecular weight protein subunits UQCRH/QCR6, UQCRB/QCR7, UQCRQ/QCR8, UQCR10/QCR9, UQCR11/QCR10 and subunit 9, the cleavage product of Rieske protein UQCRFS1. The complex exists as an obligatory dimer and forms supercomplexes (SCs) in the inner mitochondrial membrane with NADH-ubiquinone oxidoreductase (complex I, CI) and cytochrome c oxidase (complex IV, CIV), resulting in different assemblies (supercomplex SCI(1)III(2)IV(1) and megacomplex MCI(2)III(2)IV(2)). Incorporation of the Rieske protein UQCRFS1 is the penultimate step in complex III assembly. Interacts with TTC19, which is involved in the clearance of UQCRFS1 fragments. In terms of assembly, component of the ubiquinol-cytochrome c oxidoreductase (cytochrome b-c1 complex, complex III, CIII). Subunit 9 corresponds to the mitochondrial targeting sequence (MTS) of Rieske protein UQCRFS1. It is retained after processing and incorporated inside complex III, where it remains bound to the complex and localizes between the 2 core subunits UQCRC1/QCR1 and UQCRC2/QCR2. [2Fe-2S] cluster is required as a cofactor. In terms of processing, proteolytic processing is necessary for the correct insertion of UQCRFS1 in the complex III dimer. Several fragments are generated during UQCRFS1 insertion, most probably due to the endogenous matrix-processing peptidase (MPP) activity of the 2 core protein subunits UQCRC1/QCR1 and UQCRC2/QCR2, which are homologous to the 2 mitochondrial-processing peptidase (MPP) subunits beta-MPP and alpha-MPP respectively. The action of the protease is also necessary for the clearance of the UQCRFS1 fragments.

It is found in the mitochondrion inner membrane. It carries out the reaction a quinol + 2 Fe(III)-[cytochrome c](out) = a quinone + 2 Fe(II)-[cytochrome c](out) + 2 H(+)(out). Component of the ubiquinol-cytochrome c oxidoreductase, a multisubunit transmembrane complex that is part of the mitochondrial electron transport chain which drives oxidative phosphorylation. The respiratory chain contains 3 multisubunit complexes succinate dehydrogenase (complex II, CII), ubiquinol-cytochrome c oxidoreductase (cytochrome b-c1 complex, complex III, CIII) and cytochrome c oxidase (complex IV, CIV), that cooperate to transfer electrons derived from NADH and succinate to molecular oxygen, creating an electrochemical gradient over the inner membrane that drives transmembrane transport and the ATP synthase. The cytochrome b-c1 complex catalyzes electron transfer from ubiquinol to cytochrome c, linking this redox reaction to translocation of protons across the mitochondrial inner membrane, with protons being carried across the membrane as hydrogens on the quinol. In the process called Q cycle, 2 protons are consumed from the matrix, 4 protons are released into the intermembrane space and 2 electrons are passed to cytochrome c. The Rieske protein is a catalytic core subunit containing a [2Fe-2S] iron-sulfur cluster. It cycles between 2 conformational states during catalysis to transfer electrons from the quinol bound in the Q(0) site in cytochrome b to cytochrome c1. Incorporation of UQCRFS1 is the penultimate step in complex III assembly. Functionally, component of the ubiquinol-cytochrome c oxidoreductase (cytochrome b-c1 complex, complex III, CIII). UQCRFS1 undergoes proteolytic processing once it is incorporated in the complex III dimer. One of the fragments, called subunit 9, corresponds to its mitochondrial targeting sequence (MTS). The proteolytic processing is necessary for the correct insertion of UQCRFS1 in the complex III dimer, but the persistence of UQCRFS1-derived fragments may prevent newly imported UQCRFS1 to be processed and assembled into complex III and is detrimental for the complex III structure and function. The chain is Cytochrome b-c1 complex subunit Rieske, mitochondrial (UQCRFS1) from Chlorocebus aethiops (Green monkey).